The primary structure comprises 302 residues: Segregation and condensation protein A (302 aa).

This sequence belongs to the ScpA family. In terms of assembly, component of a cohesin-like complex composed of ScpA, ScpB and the Smc homodimer, in which ScpA and ScpB bind to the head domain of Smc. The presence of the three proteins is required for the association of the complex with DNA.

The protein resides in the cytoplasm. Functionally, participates in chromosomal partition during cell division. May act via the formation of a condensin-like complex containing Smc and ScpB that pull DNA away from mid-cell into both cell halves. This chain is Segregation and condensation protein A, found in Xylella fastidiosa (strain Temecula1 / ATCC 700964).